Here is a 448-residue protein sequence, read N- to C-terminus: Trigger factor (448 aa).

A PPIase FKBP-type domain is found at 162–243 (GDFVQIDLNA…VRTVKEKELP (82 aa)).

The protein belongs to the FKBP-type PPIase family. Tig subfamily.

The protein resides in the cytoplasm. It carries out the reaction [protein]-peptidylproline (omega=180) = [protein]-peptidylproline (omega=0). Its function is as follows. Involved in protein export. Acts as a chaperone by maintaining the newly synthesized protein in an open conformation. Functions as a peptidyl-prolyl cis-trans isomerase. In Salinispora arenicola (strain CNS-205), this protein is Trigger factor.